We begin with the raw amino-acid sequence, 194 residues long: HTH-type transcriptional regulator BetI (194 aa).

An HTH tetR-type domain is found at 8 to 68 (EIRRAQLIDA…ATMRHVLRDL (61 aa)). Residues 31 to 50 (TLASVAQRANISTGIVSHYF) constitute a DNA-binding region (H-T-H motif).

The protein operates within amine and polyamine biosynthesis; betaine biosynthesis via choline pathway [regulation]. Repressor involved in the biosynthesis of the osmoprotectant glycine betaine. It represses transcription of the choline transporter BetT and the genes of BetAB involved in the synthesis of glycine betaine. The polypeptide is HTH-type transcriptional regulator BetI (Burkholderia ambifaria (strain MC40-6)).